The chain runs to 83 residues: Exodeoxyribonuclease 7 small subunit (83 aa).

It belongs to the XseB family. As to quaternary structure, heterooligomer composed of large and small subunits.

It is found in the cytoplasm. The catalysed reaction is Exonucleolytic cleavage in either 5'- to 3'- or 3'- to 5'-direction to yield nucleoside 5'-phosphates.. In terms of biological role, bidirectionally degrades single-stranded DNA into large acid-insoluble oligonucleotides, which are then degraded further into small acid-soluble oligonucleotides. The sequence is that of Exodeoxyribonuclease 7 small subunit from Rhodopseudomonas palustris (strain ATCC BAA-98 / CGA009).